The following is a 295-amino-acid chain: Oxidoreductase AN1597 (295 aa).

It belongs to the asaB hydroxylase/desaturase family.

It functions in the pathway secondary metabolite biosynthesis; terpenoid biosynthesis. Functionally, oxidoreductase; part of the gene cluster that mediates the biosynthesis of the diterpene ent-pimara-8(14),15-diene (PD). Within the cluster, the HMG-CoA reductase AN1593 functions in the mevalonate pathway, which produces isoprenoid precursors. The geranylgeranyl pyrophosphate (GGPP) synthase AN1592 is needed in the formation of GGPP, the precursor for diterpenes. Lastly, the pimaradiene synthase pbcA performs the 2 cyclization steps that convert GGPP to ent-pimara-8(14),15-diene. The putative roles of the remaining cluster enzymes in ent-pimara-8(14),15-diene biosynthesis is unclear. The cytochrome P450 monooxygenase AN1598, the glutathione S-transferase AN1595, the oxidoreductases AN1596 and AN1597 probably function as decorative enzymes. It is possible that in biological conditions the compound is oxidized to ent-pimara-8(14),15-dien-19-oic acid, which is a bioactive diterpene compound predominant in many plant extracts. This is Oxidoreductase AN1597 from Emericella nidulans (strain FGSC A4 / ATCC 38163 / CBS 112.46 / NRRL 194 / M139) (Aspergillus nidulans).